A 445-amino-acid chain; its full sequence is MSEFTQDTVQKPIDELVTWVKQYDFSLNLPTERLAFLLAIAVLSNERFDEELGEGELHDAFAIVTRLFAESGEASAFRANNAINDLVKQRLLSRFTSEMTEGASIYRLTPLAIGITDYYVRHREFSKLKLSIQLSMVADEMAKAVESAQQGGSVAHWRKNVFGVLKYSVSEIFDRIDLNQRVMDEQQQSVKEQIADLLNKDWRDAINNCEALLSETSATLRELQDTLQAAGDELQTQILDIQECVYGDLELDFIEETLSALQMKLDRITSWGQQSIDLWIGYDRHVHKFIRTAIDMDQNRAFSQRLRQSMNDYFEQPWYLTYADAERLSDLRDETLTLRDEEVTGHVPTEVEYEELQQVNDELAQRIGDMLKVHKEQGAAIDLALVLRDYLASHPRTHHFDLARMVVDQAVRLGYSESDYRAIQPDWTAINDFGAKVQANVIDRY.

The tract at residues 213–241 (LSETSATLRELQDTLQAAGDELQTQILDI) is leucine-zipper.

Belongs to the MukF family. Interacts, and probably forms a ternary complex, with MukE and MukB via its C-terminal region. The complex formation is stimulated by calcium or magnesium. It is required for an interaction between MukE and MukB.

The protein localises to the cytoplasm. It localises to the nucleoid. Its function is as follows. Involved in chromosome condensation, segregation and cell cycle progression. May participate in facilitating chromosome segregation by condensation DNA from both sides of a centrally located replisome during cell division. Not required for mini-F plasmid partitioning. Probably acts via its interaction with MukB and MukE. Overexpression results in anucleate cells. It has a calcium binding activity. In Vibrio cholerae serotype O1 (strain ATCC 39315 / El Tor Inaba N16961), this protein is Chromosome partition protein MukF.